Reading from the N-terminus, the 198-residue chain is Putative transposase InsO for insertion sequence element IS911B (198 aa).

The 94-residue stretch at Ala-105–Val-198 folds into the Integrase catalytic domain.

Functionally, involved in the transposition of the insertion sequence IS911B. The protein is Putative transposase InsO for insertion sequence element IS911B (insO2) of Escherichia coli (strain K12).